The sequence spans 503 residues: Rhomboid-type serine protease 2 (503 aa).

The segment covering 1-11 has biased composition (polar residues); it reads MAAQSYYNGAY. The disordered stretch occupies residues 1 to 66; the sequence is MAAQSYYNGA…SLRYSQQSIG (66 aa). Over 1–136 the chain is Cytoplasmic; sequence MAAQSYYNGA…QKKKGFFQKK (136 aa). The chain crosses the membrane as a helical span at residues 137–157; the sequence is IAYVTYILTIAQIIVFIVELV. Over 158 to 253 the chain is Extracellular; the sequence is KMGQLTGSPI…DKPAPDQWFR (96 aa). Residues 254 to 274 traverse the membrane as a helical segment; that stretch reads FIIPMFLHSGFVHIGFNLLVQ. Topologically, residues 275–283 are cytoplasmic; it reads MTMGADMER. A helical transmembrane segment spans residues 284–304; the sequence is MIGWWRYGLVYLSSGIWGFVL. At 305 to 316 the chain is on the extracellular side; it reads GGNYAGQGEASC. A helical transmembrane segment spans residues 317 to 337; it reads GCSGALFGILALFVLDLLYGW. S319 functions as the Nucleophile in the catalytic mechanism. The Cytoplasmic portion of the chain corresponds to 338-342; that stretch reads NDRQN. A helical transmembrane segment spans residues 343–363; that stretch reads PWVELIIMVLGIAVSFVLGLL. Topologically, residues 364–365 are extracellular; that stretch reads PG. Residues 366 to 386 form a helical membrane-spanning segment; it reads LDNFSHLGGFTMGLALGLCVM. Residue H371 is part of the active site. At 387-449 the chain is on the cytoplasmic side; it reads RSPNALRERI…FAGRKPLWWA (63 aa). The helical transmembrane segment at 450–470 threads the bilayer; it reads WWLVRLGALVAVLIGFILLIV. Residues 471-503 are Extracellular-facing; sequence NFYKYPSSNCSWCYRFSCLPVNGWCDQGNLFSR.

The protein belongs to the peptidase S54 family.

The protein localises to the membrane. The catalysed reaction is Cleaves type-1 transmembrane domains using a catalytic dyad composed of serine and histidine that are contributed by different transmembrane domains.. Probable rhomboid-type serine protease that catalyzes intramembrane proteolysis. The polypeptide is Rhomboid-type serine protease 2 (Emericella nidulans (strain FGSC A4 / ATCC 38163 / CBS 112.46 / NRRL 194 / M139) (Aspergillus nidulans)).